Here is a 120-residue protein sequence, read N- to C-terminus: NAD(P)H-quinone oxidoreductase subunit 3 (120 aa).

Transmembrane regions (helical) follow at residues 6 to 26 (GYDA…LALV), 64 to 84 (MFAL…PWAV), and 89 to 109 (LGLL…VALA).

It belongs to the complex I subunit 3 family. In terms of assembly, NDH-1 can be composed of about 15 different subunits; different subcomplexes with different compositions have been identified which probably have different functions.

The protein resides in the cellular thylakoid membrane. The enzyme catalyses a plastoquinone + NADH + (n+1) H(+)(in) = a plastoquinol + NAD(+) + n H(+)(out). It carries out the reaction a plastoquinone + NADPH + (n+1) H(+)(in) = a plastoquinol + NADP(+) + n H(+)(out). In terms of biological role, NDH-1 shuttles electrons from an unknown electron donor, via FMN and iron-sulfur (Fe-S) centers, to quinones in the respiratory and/or the photosynthetic chain. The immediate electron acceptor for the enzyme in this species is believed to be plastoquinone. Couples the redox reaction to proton translocation, and thus conserves the redox energy in a proton gradient. Cyanobacterial NDH-1 also plays a role in inorganic carbon-concentration. The sequence is that of NAD(P)H-quinone oxidoreductase subunit 3 from Synechococcus sp. (strain CC9902).